A 221-amino-acid polypeptide reads, in one-letter code: DNA mismatch repair protein MutH (221 aa).

It belongs to the MutH family.

It localises to the cytoplasm. Its function is as follows. Sequence-specific endonuclease that cleaves unmethylated GATC sequences. It is involved in DNA mismatch repair. The protein is DNA mismatch repair protein MutH of Vibrio cholerae serotype O1 (strain ATCC 39541 / Classical Ogawa 395 / O395).